Here is a 370-residue protein sequence, read N- to C-terminus: Actin-related protein 2/3 complex subunit 1A (370 aa).

WD repeat units follow at residues 6 to 45, 50 to 89, 140 to 179, 202 to 241, 244 to 284, and 322 to 365; these read FLLEPITCHAWNRDRTQIALSPNNHEVHIYKKNGGQWVKA, EHNGHITGIDWAPKSDRIVTCGADRNAYVWSQKDGVWKPT, PIRSTVLSLDWHPNNVLLAAGSCDFKCRVFSAYIKEVDEK, GTGGWVHGVSFSASGSRLAWVSHDSTVSVADASKSVQVST, TEFL…TFVS, and LHQN…SSIQ.

Belongs to the WD repeat ARPC1 family. As to quaternary structure, probable component of the Arp2/3 complex in which it may replace ARPC1B.

The protein localises to the cytoplasm. The protein resides in the cytoskeleton. It localises to the nucleus. Probably functions as a component of the Arp2/3 complex which is involved in regulation of actin polymerization and together with an activating nucleation-promoting factor (NPF) mediates the formation of branched actin networks. In addition to its role in the cytoplasmic cytoskeleton, the Arp2/3 complex also promotes actin polymerization in the nucleus, thereby regulating gene transcription and repair of damaged DNA. This chain is Actin-related protein 2/3 complex subunit 1A (ARPC1A), found in Bos taurus (Bovine).